A 170-amino-acid chain; its full sequence is 6,7-dimethyl-8-ribityllumazine synthase 2 (170 aa).

Residues Trp25, 59-61, and 83-85 contribute to the 5-amino-6-(D-ribitylamino)uracil site; these read AFE and LVV. Arg91 serves as the catalytic Proton donor. Ser116 lines the 5-amino-6-(D-ribitylamino)uracil pocket. His130 is a (2S)-2-hydroxy-3-oxobutyl phosphate binding site.

This sequence belongs to the DMRL synthase family. As to quaternary structure, forms an icosahedral capsid composed of 60 subunits, arranged as a dodecamer of pentamers.

It catalyses the reaction (2S)-2-hydroxy-3-oxobutyl phosphate + 5-amino-6-(D-ribitylamino)uracil = 6,7-dimethyl-8-(1-D-ribityl)lumazine + phosphate + 2 H2O + H(+). The protein operates within cofactor biosynthesis; riboflavin biosynthesis; riboflavin from 2-hydroxy-3-oxobutyl phosphate and 5-amino-6-(D-ribitylamino)uracil: step 1/2. Its function is as follows. Catalyzes the formation of 6,7-dimethyl-8-ribityllumazine by condensation of 5-amino-6-(D-ribitylamino)uracil with 3,4-dihydroxy-2-butanone 4-phosphate. This is the penultimate step in the biosynthesis of riboflavin. The polypeptide is 6,7-dimethyl-8-ribityllumazine synthase 2 (Pseudomonas syringae pv. tomato (strain ATCC BAA-871 / DC3000)).